Consider the following 891-residue polypeptide: Kinesin-like protein KIN-UB (891 aa).

Residues M1–R54 are disordered. Over residues A45 to R54 the composition is skewed to low complexity. The Kinesin motor domain maps to R54–V400. G139–T146 is a binding site for ATP. Residues R370–G378 carry the D-BOX motif. The stretch at T502 to R592 forms a coiled coil. Over residues T586–G595 the composition is skewed to basic and acidic residues. The segment at T586–I626 is disordered. Residues M607–G621 show a composition bias toward polar residues. ARM repeat units follow at residues K623–A662, E664–M704, E706–G746, and D748–K787.

This sequence belongs to the TRAFAC class myosin-kinesin ATPase superfamily. Kinesin family. Ungrouped subfamily.

The protein localises to the cytoplasm. Its subcellular location is the cytoskeleton. The sequence is that of Kinesin-like protein KIN-UB from Oryza sativa subsp. japonica (Rice).